The sequence spans 291 residues: 4-hydroxy-tetrahydrodipicolinate synthase (291 aa).

Thr44 lines the pyruvate pocket. Tyr132 (proton donor/acceptor) is an active-site residue. The Schiff-base intermediate with substrate role is filled by Lys160. Ile202 is a binding site for pyruvate.

It belongs to the DapA family. Homotetramer; dimer of dimers.

It is found in the cytoplasm. The enzyme catalyses L-aspartate 4-semialdehyde + pyruvate = (2S,4S)-4-hydroxy-2,3,4,5-tetrahydrodipicolinate + H2O + H(+). The protein operates within amino-acid biosynthesis; L-lysine biosynthesis via DAP pathway; (S)-tetrahydrodipicolinate from L-aspartate: step 3/4. In terms of biological role, catalyzes the condensation of (S)-aspartate-beta-semialdehyde [(S)-ASA] and pyruvate to 4-hydroxy-tetrahydrodipicolinate (HTPA). The polypeptide is 4-hydroxy-tetrahydrodipicolinate synthase (Rhodospirillum centenum (strain ATCC 51521 / SW)).